Consider the following 104-residue polypeptide: Zinc-containing ferredoxin-2 (104 aa).

The interval 2-37 (GIDPNYRQNRQVVGEHEGHKIYGPVEPPGKLGIHGT) is N-terminal extension. Positions 17, 20, and 35 each coordinate Zn(2+). 4Fe-4S ferredoxin-type domains are found at residues 38–66 (IVGVDFDVCIADGSCINACPVNVFQWFDT) and 75–104 (KADPINEKACIFCMACVNVCPVAAIDVKPP). 2 residues coordinate [3Fe-4S] cluster: C46 and C52. C56 contributes to the [4Fe-4S] cluster binding site. D77 contributes to the Zn(2+) binding site. 3 residues coordinate [4Fe-4S] cluster: C84, C87, and C90. C94 is a binding site for [3Fe-4S] cluster.

Requires [3Fe-4S] cluster as cofactor. The cofactor is [4Fe-4S] cluster. Zn(2+) serves as cofactor.

In terms of biological role, ferredoxins are iron-sulfur proteins that transfer electrons in a wide variety of metabolic reactions. The sequence is that of Zinc-containing ferredoxin-2 (zfx2) from Sulfurisphaera tokodaii (strain DSM 16993 / JCM 10545 / NBRC 100140 / 7) (Sulfolobus tokodaii).